Reading from the N-terminus, the 176-residue chain is CASP-like protein 5A1 (176 aa).

Topologically, residues 1–45 (MDASHPAVYPVGVPPTAVDPPPRVRMKDYEGMPSTLGGLVLRSGQ) are cytoplasmic. A helical membrane pass occupies residues 46-66 (FACAVTALSIMISIPDFSSVT). A topological domain (extracellular) is located at residue A67. A helical transmembrane segment spans residues 68–88 (FCYLVAAMALQLLWSVSLAVV). Residues 89–102 (DGYALLLRRTLHNP) lie on the Cytoplasmic side of the membrane. The chain crosses the membrane as a helical span at residues 103-123 (VLLSLLVIGDWVTSTLSLAAA). The Extracellular segment spans residues 124-151 (CSSAGITVLIDSDLAQCAHNHCGRYEAA). Residues 152-172 (VAMAFLTWFLVSLSFFFSFWL) form a helical membrane-spanning segment. The Cytoplasmic segment spans residues 173–176 (LATR).

The protein belongs to the Casparian strip membrane proteins (CASP) family. In terms of assembly, homodimer and heterodimers.

Its subcellular location is the cell membrane. This Selaginella moellendorffii (Spikemoss) protein is CASP-like protein 5A1.